We begin with the raw amino-acid sequence, 208 residues long: Putative proteasome subunit alpha type-4-B (208 aa).

This sequence belongs to the peptidase T1A family. Component of the 20S core complex of the 26S proteasome. The 26S proteasome is composed of a core protease (CP), known as the 20S proteasome, capped at one or both ends by the 19S regulatory particle (RP/PA700). The 20S proteasome core is composed of 28 subunits that are arranged in four stacked rings, resulting in a barrel-shaped structure. The two end rings are each formed by seven alpha subunits, and the two central rings are each formed by seven beta subunits. The catalytic chamber with the active sites is on the inside of the barrel.

Its subcellular location is the cytoplasm. The protein localises to the nucleus. The proteasome is a multicatalytic proteinase complex which is characterized by its ability to cleave peptides with Arg, Phe, Tyr, Leu, and Glu adjacent to the leaving group at neutral or slightly basic pH. The proteasome has an ATP-dependent proteolytic activity. In Arabidopsis thaliana (Mouse-ear cress), this protein is Putative proteasome subunit alpha type-4-B (PAC2).